A 344-amino-acid polypeptide reads, in one-letter code: Hydrophobic dipeptide epimerase (344 aa).

Substrate contacts are provided by residues Thr126 and 151-153 (KIK). Mg(2+) contacts are provided by Asp184, Glu210, and Asp235. Residues Lys257 and 307-309 (DLD) each bind substrate.

Belongs to the mandelate racemase/muconate lactonizing enzyme family. Mg(2+) serves as cofactor.

In terms of biological role, dipeptide epimerase with a preference for hydrophobic substrates. Catalyzes the epimerization of L-Ala-L-Thr, L-Ala-L-Met, L-Ala-L-His, L-Ala-L-Phe, L-Ala-L-Tyr, L-Ala-L-Trp, L-Ile-L-Ala, L-Ile-L-Ser, L-Ile-L-Met, L-Ile-L-His, L-Ile-L-Phe, L-Ile-L-Tyr, L-Ile-L-Trp, L-Phe-L-Met, L-Phe-L-His, L-Phe-L-Phe, L-Phe-L-Tyr, L-Phe-L-Trp, L-Phe-L-Ser, L-Phe-L-Thr and L-Phe-L-Lys (in vitro). The chain is Hydrophobic dipeptide epimerase from Roseobacter litoralis (strain ATCC 49566 / DSM 6996 / JCM 21268 / NBRC 15278 / OCh 149).